Here is a 272-residue protein sequence, read N- to C-terminus: Cell division protein DivIB (272 aa).

Residues 1 to 21 lie on the Cytoplasmic side of the membrane; it reads MRLSSHGKKTVSTSNNPVFNR. The helical transmembrane segment at 22-42 threads the bilayer; that stretch reads IGLFFTAAILFALFLQMLFFL. One can recognise a POTRA domain in the interval 43–115; it reads RPWQDIKETK…GTAIIRVNEN (73 aa). Over 43–272 the chain is Extracellular; it reads RPWQDIKETK…SSSKSSNSSK (230 aa). The tract at residues 253-272 is disordered; that stretch reads LSSLSSDKSKSSSKSSNSSK.

This sequence belongs to the FtsQ/DivIB family. DivIB subfamily.

It is found in the cell membrane. Functionally, cell division protein that may be involved in stabilizing or promoting the assembly of the division complex. The sequence is that of Cell division protein DivIB from Oenococcus oeni (strain ATCC BAA-331 / PSU-1).